A 794-amino-acid chain; its full sequence is Ent-copalyl diphosphate synthase 2 (794 aa).

Residues 1–35 constitute a chloroplast transit peptide; the sequence is MSSSSNVTSLPRLTTAGGVFPREMVRVHSSCNILR. K238 contributes to the substrate binding site. Mg(2+) is bound by residues D369 and D371. The DXDD motif signature appears at 369 to 372; it reads DVDD. K455 contributes to the substrate binding site.

Belongs to the terpene synthase family. Tpsc subfamily. Requires Mg(2+) as cofactor. In terms of tissue distribution, expressed in leaves.

Its subcellular location is the plastid. It is found in the chloroplast. It catalyses the reaction (2E,6E,10E)-geranylgeranyl diphosphate = ent-copalyl diphosphate. The protein operates within secondary metabolite biosynthesis; terpenoid biosynthesis. Functionally, involved in the biosynthesis of ent-kaurene diterpenoids natural products such as oridonin, miltiradiene, eriocalyxin B and nezukol, known to exhibit antitumor, anti-inflammatory and antibacterial activities. Catalyzes the conversion of (2E,6E,10E)-geranylgeranyl diphosphate (GGPP) to ent-copalyl diphosphate (ent-CPP). This Isodon eriocalyx (Plectranthus eriocalyx) protein is Ent-copalyl diphosphate synthase 2.